The primary structure comprises 242 residues: B-box zinc finger protein 20 (242 aa).

Zn(2+)-binding residues include Cys-5, Cys-8, Cys-28, His-33, Cys-58, Cys-61, Cys-81, and His-91. The segment at 5-47 (CAVCDKEEASVFCCADEAALCNGCDRHVHFANKLAGKHLRFSL) adopts a B box-type 1; atypical zinc-finger fold. The segment at 58–100 (CDICGERRALLFCQEDRAILCRECDIPIHQANEHTKKHNRFLL) adopts a B box-type 2; atypical zinc-finger fold. The tract at residues 112 to 153 (YPRASNSNSAAAFGRAKTRPKSVSSEVPSSASNEVFTSSSST) is disordered. A compositionally biased stretch (low complexity) spans 133–153 (SVSSEVPSSASNEVFTSSSST).

In terms of assembly, interacts with MED25 and COP1. In terms of processing, COP1-mediated ubiquitination and subsequent proteasomal degradation of BBX20 occurs in the dark.

It is found in the nucleus. In terms of biological role, acts as a positive regulator of seedling photomorphogenesis. Plays a negative role in brassinosteroid responses. This Arabidopsis thaliana (Mouse-ear cress) protein is B-box zinc finger protein 20.